The sequence spans 98 residues: NADH-ubiquinone oxidoreductase chain 4L (98 aa).

The next 3 membrane-spanning stretches (helical) occupy residues 2–22 (PSIS…MLIF), 29–49 (SLLC…LTIL), and 61–81 (ILLL…LVTV).

The protein belongs to the complex I subunit 4L family. As to quaternary structure, core subunit of respiratory chain NADH dehydrogenase (Complex I) which is composed of 45 different subunits.

The protein resides in the mitochondrion inner membrane. The enzyme catalyses a ubiquinone + NADH + 5 H(+)(in) = a ubiquinol + NAD(+) + 4 H(+)(out). In terms of biological role, core subunit of the mitochondrial membrane respiratory chain NADH dehydrogenase (Complex I) which catalyzes electron transfer from NADH through the respiratory chain, using ubiquinone as an electron acceptor. Part of the enzyme membrane arm which is embedded in the lipid bilayer and involved in proton translocation. In Hapalemur aureus (Golden bamboo lemur), this protein is NADH-ubiquinone oxidoreductase chain 4L (MT-ND4L).